The primary structure comprises 53 residues: uncharacterized protein (53 aa).

A helical membrane pass occupies residues Phe-18–Leu-38.

It localises to the membrane. This is an uncharacterized protein from Dictyostelium discoideum (Social amoeba).